The chain runs to 307 residues: MIEVIFLGTGGIKPTPERNVPSIAIKVEGELILFDVGEGTLRQMEIAGLSPMKIRRIFITHFHGDHYLGLPALIQTMNLWKRKEPLHIYGPENSIEFIKNLLNSGYFAPSFDVTVHELPGKARLQFEKYEVWAFEVSHGVPALGYVFKEKDRRGSFDLEKIKNLGLEPGPWMKELEEKKVINIGGRTIRLSEVTGPKKRGAKIVYTGDTEPCENVIQFSRRANLLIHEATYLNSEDRGESYHTTVEEACEIWKKSKAFNLALFHRGPRYSFKEYKEGATKLCPQAMIPRDFDRIMVKGAEYVIFKVR.

Residues H61, H63, D65, H66, H138, D208, and H264 each contribute to the Zn(2+) site. The active-site Proton acceptor is D65.

Belongs to the RNase Z family. As to quaternary structure, homodimer. It depends on Zn(2+) as a cofactor.

It carries out the reaction Endonucleolytic cleavage of RNA, removing extra 3' nucleotides from tRNA precursor, generating 3' termini of tRNAs. A 3'-hydroxy group is left at the tRNA terminus and a 5'-phosphoryl group is left at the trailer molecule.. Zinc phosphodiesterase, which displays some tRNA 3'-processing endonuclease activity. Probably involved in tRNA maturation, by removing a 3'-trailer from precursor tRNA. This chain is Ribonuclease Z, found in Pyrococcus abyssi (strain GE5 / Orsay).